Consider the following 135-residue polypeptide: Galectin-1 (135 aa).

At Ala2 the chain carries N-acetylalanine. The Galectin domain maps to 4 to 135; that stretch reads GLVASNLNLK…DFKIKCVAFE (132 aa). 3 positions are modified to N6-acetyllysine: Lys13, Lys19, and Lys29. Ser30 carries the phosphoserine modification. Residues 45 to 49, His53, Asn62, and 69 to 72 each bind a beta-D-galactoside; these read HFNPR and WGTE. At Lys108 the chain carries N6-acetyllysine; alternate. Lys108 carries the N6-succinyllysine; alternate modification. At Lys128 the chain carries N6-acetyllysine.

As to quaternary structure, homodimer. Binds LGALS3BP. Interacts with CD2, CD3, CD4, CD6, CD7, CD43, ALCAM and CD45. Interacts with laminin (via poly-N-acetyllactosamine). Interacts with SUSD2. Interacts with cargo receptor TMED10; the interaction mediates the translocation from the cytoplasm into the ERGIC (endoplasmic reticulum-Golgi intermediate compartment) and thereby secretion. Interacts with CD69.

Its subcellular location is the secreted. It localises to the extracellular space. It is found in the extracellular matrix. The protein resides in the cytoplasm. Its function is as follows. Lectin that binds beta-galactoside and a wide array of complex carbohydrates. Plays a role in regulating apoptosis, cell proliferation and cell differentiation. Inhibits CD45 protein phosphatase activity and therefore the dephosphorylation of Lyn kinase. Strong inducer of T-cell apoptosis. Plays a negative role in Th17 cell differentiation via activation of the receptor CD69. This chain is Galectin-1 (Lgals1), found in Rattus norvegicus (Rat).